The primary structure comprises 207 residues: MTEPHANKQLEILRFIYDTVEERAFPPTVREICSAVDLSSTSTVHGHLARLEKKGYILKDATKPRAIEVTEKGREALGIKPKDIPIVGVVTAGQPILAVQDIDEYFPLPPDLENDAGELFMLRVHGESMINAGILNGDHVIVRKQSSANNGEIVVAMTEDNEATVKRFFKEDGYYRLQPENDTMDPIILPVVQILGKVVGLYRNNID.

Residues V29–A49 constitute a DNA-binding region (H-T-H motif). Catalysis depends on for autocatalytic cleavage activity residues S128 and K166.

This sequence belongs to the peptidase S24 family. Homodimer.

It carries out the reaction Hydrolysis of Ala-|-Gly bond in repressor LexA.. Represses a number of genes involved in the response to DNA damage (SOS response), including recA and lexA. In the presence of single-stranded DNA, RecA interacts with LexA causing an autocatalytic cleavage which disrupts the DNA-binding part of LexA, leading to derepression of the SOS regulon and eventually DNA repair. The protein is LexA repressor of Lactobacillus gasseri (strain ATCC 33323 / DSM 20243 / BCRC 14619 / CIP 102991 / JCM 1131 / KCTC 3163 / NCIMB 11718 / NCTC 13722 / AM63).